A 136-amino-acid chain; its full sequence is ATP synthase epsilon chain (136 aa).

Residues 104–136 (AGMEGQPASPEKVKAQQQLNEARARMQASKSAD) are disordered.

Belongs to the ATPase epsilon chain family. In terms of assembly, F-type ATPases have 2 components, CF(1) - the catalytic core - and CF(0) - the membrane proton channel. CF(1) has five subunits: alpha(3), beta(3), gamma(1), delta(1), epsilon(1). CF(0) has three main subunits: a, b and c.

It localises to the cellular thylakoid membrane. Produces ATP from ADP in the presence of a proton gradient across the membrane. This is ATP synthase epsilon chain from Synechococcus sp. (strain CC9902).